A 263-amino-acid polypeptide reads, in one-letter code: Regulatory protein RecX (263 aa).

This sequence belongs to the RecX family.

The protein localises to the cytoplasm. Modulates RecA activity. The chain is Regulatory protein RecX from Bacillus licheniformis (strain ATCC 14580 / DSM 13 / JCM 2505 / CCUG 7422 / NBRC 12200 / NCIMB 9375 / NCTC 10341 / NRRL NRS-1264 / Gibson 46).